Here is a 353-residue protein sequence, read N- to C-terminus: Cyclic GMP-AMP synthase-like receptor (353 aa).

Residues S60 and 72–74 (EYD) each bind ATP. E72, D74, and D183 together coordinate Mg(2+). D183 lines the GTP pocket. K245 contributes to the ATP binding site. Mn(2+)-binding residues include L269 and E270.

It belongs to the mab-21 family. Requires Mg(2+) as cofactor. Mn(2+) is required as a cofactor.

It catalyses the reaction GTP + ATP = 2',3'-cGAMP + 2 diphosphate. It carries out the reaction GTP + ATP = pppGp(2'-5')A + diphosphate. The enzyme catalyses pppGp(2'-5')A = 2',3'-cGAMP + diphosphate. Functionally, nucleotidyltransferase that catalyzes the formation of cyclic GMP-AMP (2',3'-cGAMP) from ATP and GTP and plays a key role in innate immunity. Acts as a key sensor of double-stranded RNA (dsRNA), the presence of dsRNA in the cytoplasm being a danger signal that triggers the immune responses. Directly binds dsRNA, activating the nucleotidyltransferase activity, leading to synthesis of 2',3'-cGAMP, a second messenger that binds to and activates Sting, thereby triggering the immune response via activation of the NF-kappa-B transcription factor. The sequence is that of Cyclic GMP-AMP synthase-like receptor from Nicrophorus vespilloides (Boreal carrion beetle).